A 126-amino-acid polypeptide reads, in one-letter code: Small ribosomal subunit protein uS13c (126 aa).

A disordered region spans residues 95 to 126; that stretch reads GLPLRGQNTRTNARTKRGIKKTMAGKKKAPRK. Positions 107–126 are enriched in basic residues; that stretch reads ARTKRGIKKTMAGKKKAPRK.

The protein belongs to the universal ribosomal protein uS13 family. As to quaternary structure, part of the 30S ribosomal subunit.

It is found in the plastid. The protein localises to the chloroplast. Its function is as follows. Located at the top of the head of the 30S subunit, it contacts several helices of the 16S rRNA. The sequence is that of Small ribosomal subunit protein uS13c from Gracilaria tenuistipitata var. liui (Red alga).